The sequence spans 189 residues: Molybdopterin synthase catalytic subunit (189 aa).

The segment covering 1–30 (MSSLEISNSCFSPETRSPSSRQSVEDNASE) has biased composition (polar residues). The segment at 1–41 (MSSLEISNSCFSPETRSPSSRQSVEDNASEPSGKDVDDVQE) is disordered. The residue at position 20 (serine 20) is a Phosphoserine. A compositionally biased stretch (basic and acidic residues) spans 32–41 (SGKDVDDVQE). Substrate contacts are provided by residues 143–144 (HR), lysine 159, and 166–168 (KKE).

This sequence belongs to the MoaE family. MOCS2B subfamily. Heterotetramer; composed of 2 small (MOCS2A) and 2 large (MOCS2B) subunits.

It is found in the cytoplasm. Its subcellular location is the cytosol. The enzyme catalyses 2 [molybdopterin-synthase sulfur-carrier protein]-C-terminal-Gly-aminoethanethioate + cyclic pyranopterin phosphate + H2O = molybdopterin + 2 [molybdopterin-synthase sulfur-carrier protein]-C-terminal Gly-Gly + 2 H(+). It functions in the pathway cofactor biosynthesis; molybdopterin biosynthesis. In terms of biological role, catalytic subunit of the molybdopterin synthase complex, a complex that catalyzes the conversion of precursor Z into molybdopterin. Acts by mediating the incorporation of 2 sulfur atoms from thiocarboxylated MOCS2A into precursor Z to generate a dithiolene group. This chain is Molybdopterin synthase catalytic subunit, found in Mus musculus (Mouse).